The sequence spans 212 residues: Cell division protein YtfB (212 aa).

A helical transmembrane segment spans residues 34–50; sequence GIIIAAIVLVVGFLLPS. A disordered region spans residues 88 to 127; that stretch reads NDPDQVAPVAPEPIQEGQPEEQPQTTQTQPFQPDSGIDNQ. The segment covering 99–120 has biased composition (low complexity); sequence EPIQEGQPEEQPQTTQTQPFQP. The interval 117 to 212 is oapA; sequence PFQPDSGIDN…QPDGSFIRAR (96 aa).

The protein belongs to the OapA family.

It is found in the cell inner membrane. Cell division protein whose function is related to the generation of a transient cell wall structure. Function is linked to the late stages of cell division. The sequence is that of Cell division protein YtfB (ytfB) from Escherichia coli (strain K12).